A 755-amino-acid polypeptide reads, in one-letter code: Polyribonucleotide nucleotidyltransferase (755 aa).

Positions 545 and 551 each coordinate Mg(2+). Residues 611 to 670 form the KH domain; sequence PRITAITVPVNKIGEVIGPKGKTINSITEETGANISIEEDGTVYVSAASGAAAEAAIEKI. Residues 682–751 enclose the S1 motif domain; that stretch reads GERFLGTVVK…NRGKISLAPV (70 aa).

This sequence belongs to the polyribonucleotide nucleotidyltransferase family. Requires Mg(2+) as cofactor.

The protein resides in the cytoplasm. The catalysed reaction is RNA(n+1) + phosphate = RNA(n) + a ribonucleoside 5'-diphosphate. Involved in mRNA degradation. Catalyzes the phosphorolysis of single-stranded polyribonucleotides processively in the 3'- to 5'-direction. This Corynebacterium diphtheriae (strain ATCC 700971 / NCTC 13129 / Biotype gravis) protein is Polyribonucleotide nucleotidyltransferase.